The following is an 84-amino-acid chain: Small ribosomal subunit protein uS17 (84 aa).

This sequence belongs to the universal ribosomal protein uS17 family. As to quaternary structure, part of the 30S ribosomal subunit.

Its function is as follows. One of the primary rRNA binding proteins, it binds specifically to the 5'-end of 16S ribosomal RNA. In Enterobacter sp. (strain 638), this protein is Small ribosomal subunit protein uS17.